Consider the following 582-residue polypeptide: Threonine--tRNA ligase (582 aa).

The tract at residues D185–P478 is catalytic. Residues C278, H329, and H455 each contribute to the Zn(2+) site.

This sequence belongs to the class-II aminoacyl-tRNA synthetase family. As to quaternary structure, homodimer. It depends on Zn(2+) as a cofactor.

Its subcellular location is the cytoplasm. The enzyme catalyses tRNA(Thr) + L-threonine + ATP = L-threonyl-tRNA(Thr) + AMP + diphosphate + H(+). Functionally, catalyzes the attachment of threonine to tRNA(Thr) in a two-step reaction: L-threonine is first activated by ATP to form Thr-AMP and then transferred to the acceptor end of tRNA(Thr). Also edits incorrectly charged L-seryl-tRNA(Thr). The protein is Threonine--tRNA ligase of Dehalococcoides mccartyi (strain ATCC BAA-2100 / JCM 16839 / KCTC 5957 / BAV1).